The following is a 158-amino-acid chain: Urease accessory protein UreE (158 aa).

Belongs to the UreE family.

The protein resides in the cytoplasm. Involved in urease metallocenter assembly. Binds nickel. Probably functions as a nickel donor during metallocenter assembly. The protein is Urease accessory protein UreE of Microcystis aeruginosa (strain NIES-843 / IAM M-2473).